Reading from the N-terminus, the 156-residue chain is 3-dehydroquinate dehydratase (156 aa).

Y22 (proton acceptor) is an active-site residue. Positions 73, 79, and 86 each coordinate substrate. The active-site Proton donor is the H99. Substrate is bound by residues 100–101 (LS) and R110.

The protein belongs to the type-II 3-dehydroquinase family. Homododecamer.

It catalyses the reaction 3-dehydroquinate = 3-dehydroshikimate + H2O. The protein operates within metabolic intermediate biosynthesis; chorismate biosynthesis; chorismate from D-erythrose 4-phosphate and phosphoenolpyruvate: step 3/7. Functionally, catalyzes a trans-dehydration via an enolate intermediate. This chain is 3-dehydroquinate dehydratase, found in Nitratiruptor sp. (strain SB155-2).